A 297-amino-acid polypeptide reads, in one-letter code: Phosphate import ATP-binding protein PstB (297 aa).

Residues M50–I292 form the ABC transporter domain. G82–S89 is an ATP binding site.

This sequence belongs to the ABC transporter superfamily. Phosphate importer (TC 3.A.1.7) family. The complex is composed of two ATP-binding proteins (PstB), two transmembrane proteins (PstC and PstA) and a solute-binding protein (PstS).

Its subcellular location is the cell inner membrane. It catalyses the reaction phosphate(out) + ATP + H2O = ADP + 2 phosphate(in) + H(+). Part of the ABC transporter complex PstSACB involved in phosphate import. Responsible for energy coupling to the transport system. The sequence is that of Phosphate import ATP-binding protein PstB from Alcanivorax borkumensis (strain ATCC 700651 / DSM 11573 / NCIMB 13689 / SK2).